The chain runs to 230 residues: Leucyl/phenylalanyl-tRNA--protein transferase (230 aa).

The protein belongs to the L/F-transferase family.

It is found in the cytoplasm. It carries out the reaction N-terminal L-lysyl-[protein] + L-leucyl-tRNA(Leu) = N-terminal L-leucyl-L-lysyl-[protein] + tRNA(Leu) + H(+). It catalyses the reaction N-terminal L-arginyl-[protein] + L-leucyl-tRNA(Leu) = N-terminal L-leucyl-L-arginyl-[protein] + tRNA(Leu) + H(+). The catalysed reaction is L-phenylalanyl-tRNA(Phe) + an N-terminal L-alpha-aminoacyl-[protein] = an N-terminal L-phenylalanyl-L-alpha-aminoacyl-[protein] + tRNA(Phe). Functions in the N-end rule pathway of protein degradation where it conjugates Leu, Phe and, less efficiently, Met from aminoacyl-tRNAs to the N-termini of proteins containing an N-terminal arginine or lysine. The chain is Leucyl/phenylalanyl-tRNA--protein transferase from Syntrophotalea carbinolica (strain DSM 2380 / NBRC 103641 / GraBd1) (Pelobacter carbinolicus).